The primary structure comprises 188 residues: Nicotinamide/nicotinic acid mononucleotide adenylyltransferase (188 aa).

This sequence belongs to the archaeal NMN adenylyltransferase family.

It catalyses the reaction beta-nicotinamide D-ribonucleotide + ATP + H(+) = diphosphate + NAD(+). The catalysed reaction is nicotinate beta-D-ribonucleotide + ATP + H(+) = deamido-NAD(+) + diphosphate. It functions in the pathway cofactor biosynthesis; NAD(+) biosynthesis; NAD(+) from nicotinamide D-ribonucleotide: step 1/1. It participates in cofactor biosynthesis; NAD(+) biosynthesis; deamido-NAD(+) from nicotinate D-ribonucleotide: step 1/1. Functionally, dual substrate specificity enzyme that catalyzes the formation of NAD(+) from nicotinamide mononucleotide (NMN) and the formation of deamido-NAD(+) (NaAD) from nicotinate mononucleotide (NaMN). Shows nearly identical catalytic efficiency for both physiological substrates. Plays an essential role in all three routes of NAD biogenesis, de novo synthesis as well as the deamidating and nondeamidating salvage pathways. This is Nicotinamide/nicotinic acid mononucleotide adenylyltransferase from Acinetobacter baylyi (strain ATCC 33305 / BD413 / ADP1).